A 59-amino-acid chain; its full sequence is MIRKYWWLVVFAVFVFLFDTLLMQWIELLATETDKCRNMNSVNPLKLVNCDELNFQDRM.

Residues 6–26 traverse the membrane as a helical segment; the sequence is WWLVVFAVFVFLFDTLLMQWI.

Its subcellular location is the membrane. This is an uncharacterized protein from Escherichia coli O157:H7.